A 379-amino-acid chain; its full sequence is Cytochrome b (379 aa).

4 helical membrane-spanning segments follow: residues 33 to 53, 77 to 98, 113 to 133, and 178 to 198; these read FGSLLGICLILQILTGLFLAM, WMIRYMHANGASLFFICLFMHV, WNIGILLLLTVMATAFMGYVL, and FFAFHFILPFIISALAAVHLL. Residues histidine 83 and histidine 97 each coordinate heme b. Heme b is bound by residues histidine 182 and histidine 196. Position 201 (histidine 201) interacts with a ubiquinone. 4 helical membrane passes run 226 to 246, 288 to 308, 320 to 340, and 347 to 367; these read IKDILGLLFLILALMLLVLFS, LGGVLPHAMSILILPIIPMLH, LSQCMFWLLVADLPILTWIGG, and FITIGQLASVYISSILLXLMP.

Belongs to the cytochrome b family. As to quaternary structure, the cytochrome bc1 complex contains 11 subunits: 3 respiratory subunits (MT-CYB, CYC1 and UQCRFS1), 2 core proteins (UQCRC1 and UQCRC2) and 6 low-molecular weight proteins (UQCRH/QCR6, UQCRB/QCR7, UQCRQ/QCR8, UQCR10/QCR9, UQCR11/QCR10 and a cleavage product of UQCRFS1). This cytochrome bc1 complex then forms a dimer. Requires heme b as cofactor.

Its subcellular location is the mitochondrion inner membrane. Its function is as follows. Component of the ubiquinol-cytochrome c reductase complex (complex III or cytochrome b-c1 complex) that is part of the mitochondrial respiratory chain. The b-c1 complex mediates electron transfer from ubiquinol to cytochrome c. Contributes to the generation of a proton gradient across the mitochondrial membrane that is then used for ATP synthesis. This chain is Cytochrome b (MT-CYB), found in Chrotogale owstoni (Owston's palm civet).